The following is a 466-amino-acid chain: Cysteine--tRNA ligase (466 aa).

Zn(2+) is bound at residue Cys28. The 'HIGH' region motif lies at 30–40 (PTVYNYIHIGN). Zn(2+) contacts are provided by Cys208, His233, and Glu237. A 'KMSKS' region motif is present at residues 265–269 (KMSKS). Residue Lys268 coordinates ATP.

This sequence belongs to the class-I aminoacyl-tRNA synthetase family. As to quaternary structure, monomer. It depends on Zn(2+) as a cofactor.

It localises to the cytoplasm. It catalyses the reaction tRNA(Cys) + L-cysteine + ATP = L-cysteinyl-tRNA(Cys) + AMP + diphosphate. In Staphylococcus saprophyticus subsp. saprophyticus (strain ATCC 15305 / DSM 20229 / NCIMB 8711 / NCTC 7292 / S-41), this protein is Cysteine--tRNA ligase.